We begin with the raw amino-acid sequence, 280 residues long: MSLSEAEKRKILRERRQQKFSRGGASERLNKIVGGQGSQLDTKSALDEKPEVVEEIPREAVKPEMNSSVQAKKESTAQAKAEDPQVELFRQLAEMQGQGATESTPDLFSMMKNLGATGDSPFPMAEQQVEAIDPELVEYHKYRVNTLTAKTTLVKWIVLLAYIFLLTRTDDTYFPFVVRSYLPEVFTSQSSFFSIFLTFEILATSIYYQLSVGVERETGVKTLQDTSKIVSLVSMVPEGILPIADLRGKVILAMKYWNIIAMMIGDVCFVLVAIGLVSQI.

Composition is skewed to basic and acidic residues over residues 1–17 (MSLS…ERRQ), 44–62 (SALD…EAVK), and 71–80 (AKKESTAQAK). The interval 1 to 80 (MSLSEAEKRK…AKKESTAQAK (80 aa)) is disordered. Residues 1–146 (MSLSEAEKRK…VEYHKYRVNT (146 aa)) are Cytoplasmic-facing. Residues 147–166 (LTAKTTLVKWIVLLAYIFLL) form a helical membrane-spanning segment. Residues 167–191 (TRTDDTYFPFVVRSYLPEVFTSQSS) lie on the Lumenal side of the membrane. Residues 192–211 (FFSIFLTFEILATSIYYQLS) form a helical membrane-spanning segment. At 212 to 258 (VGVERETGVKTLQDTSKIVSLVSMVPEGILPIADLRGKVILAMKYWN) the chain is on the cytoplasmic side. A helical membrane pass occupies residues 259–279 (IIAMMIGDVCFVLVAIGLVSQ). A topological domain (lumenal) is located at residue Ile-280.

The protein belongs to the GET2 family. Component of the Golgi to ER traffic (GET) complex, which is composed of GET1, GET2 and GET3. Within the complex, GET1 and GET2 form a heterotetramer which is stabilized by phosphatidylinositol binding and which binds to the GET3 homodimer.

The protein resides in the endoplasmic reticulum membrane. The protein localises to the golgi apparatus membrane. In terms of biological role, required for the post-translational delivery of tail-anchored (TA) proteins to the endoplasmic reticulum. Together with GET1, acts as a membrane receptor for soluble GET3, which recognizes and selectively binds the transmembrane domain of TA proteins in the cytosol. The GET complex cooperates with the HDEL receptor ERD2 to mediate the ATP-dependent retrieval of resident ER proteins that contain a C-terminal H-D-E-L retention signal from the Golgi to the ER. The chain is Golgi to ER traffic protein 2 from Candida glabrata (strain ATCC 2001 / BCRC 20586 / JCM 3761 / NBRC 0622 / NRRL Y-65 / CBS 138) (Yeast).